The primary structure comprises 384 residues: Kinesin-like protein KIF25 (384 aa).

Residues 1-20 (MTWTSGQLQREKQARPGSGA) form a disordered region. Residues 7–363 (QLQREKQARP…LGFGIRARQV (357 aa)) form the Kinesin motor domain. 65 to 72 (GQTGSGKS) contributes to the ATP binding site. Disordered regions lie at residues 217–256 (DQACSATLPREQTEAGRAGRSRRASQGALAPQLVPGNPAG) and 362–384 (QVQRGPARKKPPSSQTEGKRRPD).

It belongs to the TRAFAC class myosin-kinesin ATPase superfamily. Kinesin family. As to quaternary structure, homotetramer.

The protein resides in the cytoplasm. It localises to the cytoskeleton. It is found in the microtubule organizing center. Its subcellular location is the centrosome. Functionally, minus-end microtubule-dependent motor protein. Acts as a negative regulator of centrosome separation required to prevent premature centrosome separation during interphase. Required to maintain a centered nucleus to ensure that the spindle is stably oriented at the onset of mitosis. May also act as a negative regulator of amino acid starvation-induced autophagy. The polypeptide is Kinesin-like protein KIF25 (Homo sapiens (Human)).